Consider the following 339-residue polypeptide: 3-isopropylmalate dehydrogenase (339 aa).

Positions 87, 97, 124, and 214 each coordinate substrate. The Mg(2+) site is built by aspartate 214, aspartate 238, and aspartate 242. An NAD(+)-binding site is contributed by 274–286 (GSAPDIAGQGIAD).

This sequence belongs to the isocitrate and isopropylmalate dehydrogenases family. LeuB type 2 subfamily. In terms of assembly, homodimer. Requires Mg(2+) as cofactor. Mn(2+) is required as a cofactor.

The protein localises to the cytoplasm. It carries out the reaction (2R,3S)-3-isopropylmalate + NAD(+) = 4-methyl-2-oxopentanoate + CO2 + NADH. Its pathway is amino-acid biosynthesis; L-leucine biosynthesis; L-leucine from 3-methyl-2-oxobutanoate: step 3/4. In terms of biological role, catalyzes the oxidation of 3-carboxy-2-hydroxy-4-methylpentanoate (3-isopropylmalate) to 3-carboxy-4-methyl-2-oxopentanoate. The product decarboxylates to 4-methyl-2 oxopentanoate. In Mycobacterium ulcerans (strain Agy99), this protein is 3-isopropylmalate dehydrogenase.